The chain runs to 122 residues: Large ribosomal subunit protein uL14 (122 aa).

It belongs to the universal ribosomal protein uL14 family. As to quaternary structure, part of the 50S ribosomal subunit. Forms a cluster with proteins L3 and L19. In the 70S ribosome, L14 and L19 interact and together make contacts with the 16S rRNA in bridges B5 and B8.

In terms of biological role, binds to 23S rRNA. Forms part of two intersubunit bridges in the 70S ribosome. The protein is Large ribosomal subunit protein uL14 of Chlorobaculum tepidum (strain ATCC 49652 / DSM 12025 / NBRC 103806 / TLS) (Chlorobium tepidum).